The following is an 835-amino-acid chain: Disease resistance protein RPP13 (835 aa).

Residues 25 to 41 are a coiled coil; it reads MAVKEDLEELKTELTCI. An NB-ARC domain is found at 144 to 453; that stretch reads SSLRVRQLRR…AEGFIQGDEE (310 aa). Residue 192-199 coordinates ATP; that stretch reads GMGGLGKT.

Belongs to the disease resistance NB-LRR family. RPP13 subfamily.

In terms of biological role, disease resistance protein. Resistance proteins guard the plant against pathogens that contain an appropriate avirulence protein via an indirect interaction with this avirulence protein. That triggers a defense system including the hypersensitive response, which restricts the pathogen growth. In contrast to other resistance proteins, it works independently of ESD1 and NSD1 proteins and does not require the accumulation of salicylic acid, suggesting the existence of an independent signaling pathway. The specificity to avirulence proteins differs in the different cultivars. This is Disease resistance protein RPP13 (RPP13) from Arabidopsis thaliana (Mouse-ear cress).